Consider the following 108-residue polypeptide: uncharacterized protein (108 aa).

The next 3 membrane-spanning stretches (helical) occupy residues 4 to 24, 46 to 66, and 81 to 101; these read IIFLFRAIWLALSLLILFFSM, GMMVICFPTGIVFFIALIFIG, and IMAIIIWLYFLSGGYIQWFVL.

The protein resides in the cell membrane. This is an uncharacterized protein from Escherichia coli O157:H7.